Here is a 391-residue protein sequence, read N- to C-terminus: MEERTRAYLRGRFGDVYRRAEIDLPPRADDREWGYIPWTAGPDTTMVRHKSTLDLGSMTSFLERKCPRHVYFSAGTYDAPGAATMDEKHWQGSDLVFDLDADHLPRVTLGEDSYAEMLSKCKDALLRLLDFLERDFGFEELTVTFSGGRGYHVHVRDAGVYELGSEERREIVDYVRGNDLALETLVEAEPVGGRGLENPTEKRMLPADGGWGRRVTTRLEAFADDLIERGEDDAVATLTEFDGVGERSARAIYNVVADNTTAVKRGNVDVHPAFLTVARRYIDETVAAEQAPIDEPVTTDTNRLIRLPGSLHGGSGLEVQRLDRAALDDFDPLVDAVPETFVGHDITVELPTEHTVELRGESLTVGPGVSTVPEYAGVFMMARGTAEKATE.

Catalysis depends on residues aspartate 98, aspartate 100, and aspartate 294.

Belongs to the eukaryotic-type primase small subunit family. Heterodimer of a small subunit (PriS) and a large subunit (PriL). Mg(2+) serves as cofactor. Mn(2+) is required as a cofactor.

Catalytic subunit of DNA primase, an RNA polymerase that catalyzes the synthesis of short RNA molecules used as primers for DNA polymerase during DNA replication. The small subunit contains the primase catalytic core and has DNA synthesis activity on its own. Binding to the large subunit stabilizes and modulates the activity, increasing the rate of DNA synthesis while decreasing the length of the DNA fragments, and conferring RNA synthesis capability. The DNA polymerase activity may enable DNA primase to also catalyze primer extension after primer synthesis. May also play a role in DNA repair. The polypeptide is DNA primase small subunit PriS (Halobacterium salinarum (strain ATCC 29341 / DSM 671 / R1)).